The chain runs to 71 residues: Conotoxin LvVIIB (71 aa).

The N-terminal stretch at 1–17 (VLIIAVLFLAASELVTA) is a signal peptide. The propeptide occupies 18–42 (DYTRDEWQYRAASLRDAMRNFRDTR). Intrachain disulfides connect C43-C57, C50-C62, and C56-C69.

Belongs to the conotoxin O1 superfamily. As to expression, expressed by the venom duct.

It localises to the secreted. This chain is Conotoxin LvVIIB, found in Conus lividus (Livid cone).